Here is a 394-residue protein sequence, read N- to C-terminus: F-box/kelch-repeat protein At1g23390 (394 aa).

The F-box domain maps to 15-62 (EEESSIDGDILESILSYLPLLDLDSACQVSKSWNRAVFYSLRRLKTMP). 4 Kelch repeats span residues 65–111 (FVYN…RSSH), 155–204 (SLII…TWLS), 206–252 (AVSS…SIGF), and 321–369 (MVYV…VIVA).

This Arabidopsis thaliana (Mouse-ear cress) protein is F-box/kelch-repeat protein At1g23390.